Consider the following 523-residue polypeptide: MVRGIIRVVSLASVSLTSSGFFLYGTGHWDPSDFGVVRIGRAVLTTAAITWDYLTELRHVKAGTEEYESIKSQVHFRSAHRLLDLCCANRGTFIKVGQHLGALEYLVPPEYTKTLSVLHSQAPCTPFPDVVQVIREDLGKEISEVFVEFEEKPLGAASLAQVHRAVLQDGRKVAVKVQHPKVQAQSARDILLMEVLLHAVKKIFPQFEFMWLIEEAKKNLPLELDFENEGRNAEKMSAIVSSFSFLRIPRIYWELSTKRVLVMEYMEGGQVNDREYMKRNQIDINQVARALGQLYSEMIFVHGFVHCDPHPGNVLVRQNPETLVPEIILLDHGLYQVLTESFRLDYCSLWQALIAADMQQIRIYSQRLGAGELYPLFACMLTARSWESVNQGIYQNTVSREEALEIRSNAATYLPEISQLLASVPRQMLLLLKTNDLLRGIETSLGTHASSSSFLNMSRCCVRALARHRKEKTDSLWSYIHISLAETFSLGQLQIYEIVLRLQASCVGCWIRRMMQWVFLYIH.

Residues 148-484 (EFEEKPLGAA…SLWSYIHISL (337 aa)) enclose the Protein kinase domain. ATP is bound by residues 154–162 (LGAASLAQV) and Lys-176. Asp-308 (proton acceptor) is an active-site residue.

The protein belongs to the protein kinase superfamily. ADCK protein kinase family.

The protein resides in the mitochondrion. Functionally, appears to be essential for maintaining mitochondrial cristae formation and mitochondrial function by acting via YME1L1 in a kinase-independent manner to regulate essential mitochondrial structural proteins OPA1 and IMMT. The action of this enzyme is not yet clear. It is not known if it has protein kinase activity and what type of substrate it would phosphorylate (Ser, Thr or Tyr). The sequence is that of AarF domain-containing protein kinase 1 (adck1) from Xenopus tropicalis (Western clawed frog).